The primary structure comprises 72 residues: Gas vesicle protein A (72 aa).

This sequence belongs to the gas vesicle GvpA family. In terms of assembly, the gas vesicle shell is 2 nm thick and consists of a single layer of this protein. It forms helical ribs nearly perpendicular to the long axis of the vesicle.

The protein resides in the gas vesicle shell. Its function is as follows. Gas vesicles are hollow, gas filled proteinaceous nanostructures found in some microorganisms. During planktonic growth they allow positioning of the organism at a favorable depth for light or nutrient acquisition. GvpA forms the protein shell. This is Gas vesicle protein A from Geotalea uraniireducens (strain Rf4) (Geobacter uraniireducens).